A 370-amino-acid polypeptide reads, in one-letter code: Uroporphyrinogen decarboxylase (370 aa).

Residues 29–33 (RQAGR), aspartate 79, tyrosine 155, serine 210, and histidine 342 contribute to the substrate site.

It belongs to the uroporphyrinogen decarboxylase family. Homodimer.

The protein localises to the cytoplasm. It catalyses the reaction uroporphyrinogen III + 4 H(+) = coproporphyrinogen III + 4 CO2. It functions in the pathway porphyrin-containing compound metabolism; protoporphyrin-IX biosynthesis; coproporphyrinogen-III from 5-aminolevulinate: step 4/4. Its function is as follows. Catalyzes the decarboxylation of four acetate groups of uroporphyrinogen-III to yield coproporphyrinogen-III. The protein is Uroporphyrinogen decarboxylase of Variovorax paradoxus (strain S110).